The sequence spans 379 residues: Chaperone protein DnaJ (379 aa).

In terms of domain architecture, J spans glutamate 5–glycine 69. The CR-type zinc-finger motif lies at glycine 141 to alanine 223. Cysteine 154, cysteine 157, cysteine 171, cysteine 174, cysteine 197, cysteine 200, and cysteine 214 together coordinate Zn(2+). CXXCXGXG motif repeat units follow at residues cysteine 154–glycine 161, cysteine 171–glycine 178, cysteine 197–glycine 204, and serine 211–glycine 218.

This sequence belongs to the DnaJ family. Homodimer. It depends on Zn(2+) as a cofactor.

It is found in the cytoplasm. In terms of biological role, participates actively in the response to hyperosmotic and heat shock by preventing the aggregation of stress-denatured proteins and by disaggregating proteins, also in an autonomous, DnaK-independent fashion. Unfolded proteins bind initially to DnaJ; upon interaction with the DnaJ-bound protein, DnaK hydrolyzes its bound ATP, resulting in the formation of a stable complex. GrpE releases ADP from DnaK; ATP binding to DnaK triggers the release of the substrate protein, thus completing the reaction cycle. Several rounds of ATP-dependent interactions between DnaJ, DnaK and GrpE are required for fully efficient folding. Also involved, together with DnaK and GrpE, in the DNA replication of plasmids through activation of initiation proteins. This chain is Chaperone protein DnaJ, found in Lactococcus lactis subsp. cremoris (Streptococcus cremoris).